Here is a 159-residue protein sequence, read N- to C-terminus: Ribosomal RNA large subunit methyltransferase H (159 aa).

Residues Leu-76, Gly-108, and 127-132 (FGKLTM) contribute to the S-adenosyl-L-methionine site.

Belongs to the RNA methyltransferase RlmH family. Homodimer.

The protein localises to the cytoplasm. The enzyme catalyses pseudouridine(1915) in 23S rRNA + S-adenosyl-L-methionine = N(3)-methylpseudouridine(1915) in 23S rRNA + S-adenosyl-L-homocysteine + H(+). Its function is as follows. Specifically methylates the pseudouridine at position 1915 (m3Psi1915) in 23S rRNA. In Lacticaseibacillus casei (strain BL23) (Lactobacillus casei), this protein is Ribosomal RNA large subunit methyltransferase H.